The primary structure comprises 385 residues: Methylthioribose-1-phosphate isomerase (385 aa).

Asp255 (proton donor) is an active-site residue.

It belongs to the eIF-2B alpha/beta/delta subunits family. MtnA subfamily.

The protein resides in the cytoplasm. Its subcellular location is the nucleus. The catalysed reaction is 5-(methylsulfanyl)-alpha-D-ribose 1-phosphate = 5-(methylsulfanyl)-D-ribulose 1-phosphate. Its pathway is amino-acid biosynthesis; L-methionine biosynthesis via salvage pathway; L-methionine from S-methyl-5-thio-alpha-D-ribose 1-phosphate: step 1/6. Its function is as follows. Catalyzes the interconversion of methylthioribose-1-phosphate (MTR-1-P) into methylthioribulose-1-phosphate (MTRu-1-P). The chain is Methylthioribose-1-phosphate isomerase (mri1) from Aspergillus clavatus (strain ATCC 1007 / CBS 513.65 / DSM 816 / NCTC 3887 / NRRL 1 / QM 1276 / 107).